The chain runs to 823 residues: NAD-dependent histone deacetylase sirtuin-1 (823 aa).

The segment covering 41–67 has biased composition (low complexity); sequence LASTSTEAEAEAEATATTTEPATSELA. The tract at residues 41 to 146 is disordered; sequence LASTSTEAEA…SSSNCSSSVE (106 aa). Residues 72-95 are compositionally biased toward basic and acidic residues; that stretch reads GEIKTKTLAAREEQEIGANLEHKT. A compositionally biased stretch (acidic residues) spans 104–137; it reads EDEDDEEEEEEDDEEEEEDDEEGITGTSNEDEDS. A Deacetylase sirtuin-type domain is found at 204-499; it reads KLASVNTFDD…LCCDESVLTE (296 aa). Residues 229–248 and 313–316 each bind NAD(+); these read GAGV…NGIY and QNID. The Proton acceptor role is filled by His-331. Zn(2+)-binding residues include Cys-339, Cys-342, Cys-363, and Cys-366. NAD(+) is bound by residues 427–429, 452–454, and Ser-469; these read GSS and NRE. 2 positions are modified to phosphoserine: Ser-618 and Ser-621. The span at 698–707 shows a compositional bias: acidic residues; sequence DYSDDDDEEE. 2 disordered regions span residues 698–722 and 777–823; these read DYSD…GNVG and IIEQ…LAAV. The segment covering 798-813 has biased composition (basic and acidic residues); it reads PSEENKQQTQIERSEE. The span at 814–823 shows a compositional bias: pro residues; it reads SPPPGQLAAV.

Belongs to the sirtuin family. Class I subfamily. Interacts with the transcriptional repressors hairy (hry) and deadpan (dpn); via basic domains. Associates with the Esc/E(z) histone methyltransferase complex. Interacts directly with E(z) and HDAC1/Rpd3. Zn(2+) serves as cofactor.

Its subcellular location is the cytoplasm. It is found in the nucleus. The protein localises to the chromosome. It carries out the reaction N(6)-acetyl-L-lysyl-[protein] + NAD(+) + H2O = 2''-O-acetyl-ADP-D-ribose + nicotinamide + L-lysyl-[protein]. In terms of biological role, NAD-dependent histone deacetylase involved in heterochromatic silencing. Mildly suppresses the heterochromatin-mediated silencing phenomenon known as position-effect variegation (PEV). Required for epigenetic silencing of the polycomb group proteins. Has histone H4 deacetylase activity in vitro. Required maternally for establishing proper segmentation of the embryo. Involved in sex determination. May be involved in the regulation of life span. This chain is NAD-dependent histone deacetylase sirtuin-1, found in Drosophila melanogaster (Fruit fly).